Consider the following 653-residue polypeptide: Fusexin 1 (653 aa).

The N-terminal stretch at 1–23 (MKNGLKASVVALFFLLAASSASA) is a signal peptide. The Extracellular portion of the chain corresponds to 24-559 (ATNSVDTVTY…MEKALSGNAG (536 aa)). Cystine bridges form between cysteine 126-cysteine 166, cysteine 397-cysteine 440, cysteine 467-cysteine 490, and cysteine 502-cysteine 519. The fusion loop stretch occupies residues 154–159 (DTWTGQ). A helical transmembrane segment spans residues 560 to 580 (ALTWAQLLLSFIGFLAGFALV). The Cytoplasmic segment spans residues 581–600 (GVKLGKMVDGLATEFIPLSD). 2 helical membrane passes run 601–621 (AVVR…AVYQ) and 622–642 (LVTN…TGYL). Residues 643–653 (YLKGTTPDINL) are Cytoplasmic-facing.

This sequence belongs to the HAP2/GCS1 family. Fusexin 1 subfamily. In terms of assembly, homotrimer stabilized by interdomain contacts and numerous Ca(2+) and Na(+) ions.

It is found in the cell surface. The protein localises to the cell membrane. Exhibits fusogenic activity. Mediates cell-cell fusion in mammalian cells (bilateral fusion). This chain is Fusexin 1, found in Haloferax sp. (strain Q22).